The sequence spans 236 residues: 2,3,4,5-tetrahydropyridine-2,6-dicarboxylate N-acetyltransferase (236 aa).

The protein belongs to the transferase hexapeptide repeat family. DapH subfamily.

The enzyme catalyses (S)-2,3,4,5-tetrahydrodipicolinate + acetyl-CoA + H2O = L-2-acetamido-6-oxoheptanedioate + CoA. The protein operates within amino-acid biosynthesis; L-lysine biosynthesis via DAP pathway; LL-2,6-diaminopimelate from (S)-tetrahydrodipicolinate (acetylase route): step 1/3. Catalyzes the transfer of an acetyl group from acetyl-CoA to tetrahydrodipicolinate. This Clostridium botulinum (strain Loch Maree / Type A3) protein is 2,3,4,5-tetrahydropyridine-2,6-dicarboxylate N-acetyltransferase.